We begin with the raw amino-acid sequence, 223 residues long: Ribonuclease T (223 aa).

Positions Met1–Glu11 are enriched in acidic residues. Residues Met1 to Met21 are disordered. The region spanning Val31–Phe205 is the Exonuclease domain. Residues Asp34, Glu36, His192, and Asp197 each contribute to the Mg(2+) site. Catalysis depends on His192, which acts as the Proton donor/acceptor.

This sequence belongs to the RNase T family. Homodimer. The cofactor is Mg(2+).

Trims short 3' overhangs of a variety of RNA species, leaving a one or two nucleotide 3' overhang. Responsible for the end-turnover of tRNA: specifically removes the terminal AMP residue from uncharged tRNA (tRNA-C-C-A). Also appears to be involved in tRNA biosynthesis. The sequence is that of Ribonuclease T from Pseudomonas fluorescens (strain ATCC BAA-477 / NRRL B-23932 / Pf-5).